The chain runs to 576 residues: K(+)/H(+) antiporter NhaP2 (576 aa).

A run of 13 helical transmembrane segments spans residues 6 to 26, 34 to 54, 58 to 78, 87 to 107, 109 to 129, 163 to 183, 185 to 205, 219 to 239, 242 to 262, 271 to 291, 299 to 319, 335 to 355, and 359 to 379; these read INSFFLIGALLTAVSVLLSPM, ILLIFLAVGILAGEDGPGGIL, YSTAYLVSNLALAIILLDGGM, VALWPALSLATFGVAITTSIT, MMAAWLFDLHWLQGLLVGAIV, PMAVFLTVTLIAILANVDTEM, FSFMFISFIKQFGLGICLGLG, LADGLYSILVLSGGLIIYAAS, LGGSGILSIYLVGLFLGNKPT, VLDGMTWVSQIGMFLVLGLLL, ILIPGFALAFGMILFARPVAV, WFISWVGLRGAVPIILAVFPM, and LPGAQLYFNLAFFVVLVSLLV. An RCK C-terminal domain is found at 405–486; it reads SGVEIYPSSE…LEALSNLFSQ (82 aa).

Belongs to the monovalent cation:proton antiporter 1 (CPA1) transporter (TC 2.A.36) family. NhaP2 subfamily.

It is found in the cell inner membrane. The enzyme catalyses K(+)(in) + H(+)(out) = K(+)(out) + H(+)(in). K(+)/H(+) antiporter that extrudes potassium in exchange for external protons and maintains the internal concentration of potassium under toxic levels. This is K(+)/H(+) antiporter NhaP2 from Shewanella baltica (strain OS155 / ATCC BAA-1091).